A 258-amino-acid chain; its full sequence is MRFLKKRGAVGIGTLIVFIAMVLVAAVAAAVLINTSGYLQQKSQSTGRQTTEEVASGIKVTSIVGYAPYDDSNKVYKPISKLAIYVSPNAGSAGIDMKKVRVILSDGSIEAVLKYDNSDADSDGTLDKDVFAVGMPDNVFEDDTGTTAYDGDQYITWSELNDKTFGIIVVQDSDGSLKPLTPTLNKGDIAIIAVRVGNYYVDSNGNLQAYSPTPDGVFGEGIKPNTHITGQVVPEHGAPGVIDFTTPSTYTQSVMELQ.

A propeptide spanning residues 1 to 8 (MRFLKKRG) is cleaved from the precursor.

It belongs to the archaeal flagellin family.

The protein localises to the archaeal flagellum. Functionally, flagellin is the subunit protein which polymerizes to form the filaments of archaeal flagella. This is Flagellin B3 (flaB3) from Thermococcus kodakarensis (strain ATCC BAA-918 / JCM 12380 / KOD1) (Pyrococcus kodakaraensis (strain KOD1)).